Consider the following 150-residue polypeptide: Phosphopantetheine adenylyltransferase (150 aa).

Thr-15 is a substrate binding site. ATP-binding positions include Thr-15–Phe-16 and His-23. Substrate is bound by residues Ile-80 and Arg-94. ATP is bound by residues Gly-95 to Arg-97, Glu-105, and Leu-130 to Arg-136.

This sequence belongs to the bacterial CoaD family. Homohexamer. Mg(2+) is required as a cofactor.

The protein resides in the cytoplasm. The enzyme catalyses (R)-4'-phosphopantetheine + ATP + H(+) = 3'-dephospho-CoA + diphosphate. The protein operates within cofactor biosynthesis; coenzyme A biosynthesis; CoA from (R)-pantothenate: step 4/5. In terms of biological role, reversibly transfers an adenylyl group from ATP to 4'-phosphopantetheine, yielding dephospho-CoA (dPCoA) and pyrophosphate. This is Phosphopantetheine adenylyltransferase from Malacoplasma penetrans (strain HF-2) (Mycoplasma penetrans).